Reading from the N-terminus, the 240-residue chain is Ribosomal RNA small subunit methyltransferase G (240 aa).

S-adenosyl-L-methionine is bound by residues Gly79, Phe84, Ala130–Glu131, and Arg149.

It belongs to the methyltransferase superfamily. RNA methyltransferase RsmG family.

Its subcellular location is the cytoplasm. Functionally, specifically methylates the N7 position of a guanine in 16S rRNA. This Desulforamulus reducens (strain ATCC BAA-1160 / DSM 100696 / MI-1) (Desulfotomaculum reducens) protein is Ribosomal RNA small subunit methyltransferase G.